A 284-amino-acid chain; its full sequence is MDAIKKKMQAMKLEKDNAMDRALLCEQQARDANLRAEKAEEEARSLQKKIQQIENDLDQTMEQLMQVNAKLDEKDKALQNAESEVAALNRRIQLLEEDLERSEERLATATAKLAEASQAADESERARKILESKGLADEERMDALENQLKEARFMAEEADKKYDEVARKLAMVEADLERAEERAESGESKIVELEEELRVVGNNLKSLEVSEEKANLREEAYKQQIKTLTTRLKEAEARAEFAERSVQKLQKEVDRLEDELVHEKEKYKFICDDLDMTFTELIGN.

The stretch at 1–284 (MDAIKKKMQA…DMTFTELIGN (284 aa)) forms a coiled coil.

It belongs to the tropomyosin family. In terms of assembly, homodimer.

In terms of biological role, tropomyosin, in association with the troponin complex, plays a central role in the calcium dependent regulation of muscle contraction. This chain is Tropomyosin, found in Periplaneta fuliginosa (Smokybrown cockroach).